A 326-amino-acid chain; its full sequence is MQNGYSVSIQHYTAKTTAMKTLKIWRPIFQRWLGKKGPVDPRYVFSRPPNNKGQDGTHFFTNPQDDNGGDNSGAEGIGEAIAKQRRQKRTRFAYNLFWVSIAGVLGYSIGYKVIYKKEQSFLPLMPASRVHKLNDRDARRIGIDKIRVLSRLKVLEQLSQHEMIKEQYGVPLLNVNTHETPNVDELTVWCEDSDPCVTGLVLEPDDGRPTIHNWYRLPYVFKWRLTHRPINIHKTINDISQNLGLTLSDVFQIITPEKVYGSFKYEYPLTSDDHYTKIWFLGEMKLGDDSLIIYKGKFHRDVTLEQIHLLRRENGKLIRYILYKNE.

A mitochondrion-targeting transit peptide spans 1–40; the sequence is MQNGYSVSIQHYTAKTTAMKTLKIWRPIFQRWLGKKGPVD. The interval 47–75 is disordered; the sequence is RPPNNKGQDGTHFFTNPQDDNGGDNSGAE. Residues 48–65 show a composition bias toward polar residues; that stretch reads PPNNKGQDGTHFFTNPQD. The helical transmembrane segment at 93 to 115 threads the bilayer; that stretch reads AYNLFWVSIAGVLGYSIGYKVIY.

This sequence belongs to the AIM39 family.

It is found in the mitochondrion membrane. This is Altered inheritance of mitochondria protein 39, mitochondrial (AIM39) from Zygosaccharomyces rouxii (strain ATCC 2623 / CBS 732 / NBRC 1130 / NCYC 568 / NRRL Y-229).